Reading from the N-terminus, the 157-residue chain is Ribosomal RNA large subunit methyltransferase H (157 aa).

S-adenosyl-L-methionine contacts are provided by residues Leu-75, Gly-106, and 125–130 (FSELTF).

This sequence belongs to the RNA methyltransferase RlmH family. As to quaternary structure, homodimer.

The protein localises to the cytoplasm. It carries out the reaction pseudouridine(1915) in 23S rRNA + S-adenosyl-L-methionine = N(3)-methylpseudouridine(1915) in 23S rRNA + S-adenosyl-L-homocysteine + H(+). In terms of biological role, specifically methylates the pseudouridine at position 1915 (m3Psi1915) in 23S rRNA. In Malacoplasma penetrans (strain HF-2) (Mycoplasma penetrans), this protein is Ribosomal RNA large subunit methyltransferase H.